The chain runs to 89 residues: uncharacterized protein (89 aa).

The chain crosses the membrane as a helical span at residues 20 to 39 (SFAMTTYLNLFVKLLIFLYI).

Its subcellular location is the membrane. This is an uncharacterized protein from Escherichia coli (strain K12).